A 150-amino-acid chain; its full sequence is Transcription antitermination protein NusB (150 aa).

Belongs to the NusB family.

Its function is as follows. Involved in transcription antitermination. Required for transcription of ribosomal RNA (rRNA) genes. Binds specifically to the boxA antiterminator sequence of the ribosomal RNA (rrn) operons. The chain is Transcription antitermination protein NusB from Alcanivorax borkumensis (strain ATCC 700651 / DSM 11573 / NCIMB 13689 / SK2).